Here is a 462-residue protein sequence, read N- to C-terminus: L-seryl-tRNA(Sec) selenium transferase (462 aa).

An N6-(pyridoxal phosphate)lysine modification is found at lysine 293.

It belongs to the SelA family. Requires pyridoxal 5'-phosphate as cofactor.

It localises to the cytoplasm. It carries out the reaction L-seryl-tRNA(Sec) + selenophosphate + H(+) = L-selenocysteinyl-tRNA(Sec) + phosphate. It participates in aminoacyl-tRNA biosynthesis; selenocysteinyl-tRNA(Sec) biosynthesis; selenocysteinyl-tRNA(Sec) from L-seryl-tRNA(Sec) (bacterial route): step 1/1. Functionally, converts seryl-tRNA(Sec) to selenocysteinyl-tRNA(Sec) required for selenoprotein biosynthesis. The sequence is that of L-seryl-tRNA(Sec) selenium transferase from Clostridium botulinum (strain Loch Maree / Type A3).